The following is a 237-amino-acid chain: Phosphoribosylaminoimidazole-succinocarboxamide synthase (237 aa).

The protein belongs to the SAICAR synthetase family.

It catalyses the reaction 5-amino-1-(5-phospho-D-ribosyl)imidazole-4-carboxylate + L-aspartate + ATP = (2S)-2-[5-amino-1-(5-phospho-beta-D-ribosyl)imidazole-4-carboxamido]succinate + ADP + phosphate + 2 H(+). It participates in purine metabolism; IMP biosynthesis via de novo pathway; 5-amino-1-(5-phospho-D-ribosyl)imidazole-4-carboxamide from 5-amino-1-(5-phospho-D-ribosyl)imidazole-4-carboxylate: step 1/2. The protein is Phosphoribosylaminoimidazole-succinocarboxamide synthase of Deinococcus radiodurans (strain ATCC 13939 / DSM 20539 / JCM 16871 / CCUG 27074 / LMG 4051 / NBRC 15346 / NCIMB 9279 / VKM B-1422 / R1).